The primary structure comprises 558 residues: Glutamine--tRNA ligase (558 aa).

Residues 34-44 (PEPNGYLHIGH) carry the 'HIGH' region motif. ATP is bound by residues 35–37 (EPN) and 41–47 (HIGHAKS). L-glutamine-binding residues include Asp67 and Tyr212. ATP-binding positions include Thr231, 261–262 (RL), and 269–271 (LSK). Positions 268 to 272 (VLSKR) match the 'KMSKS' region motif.

The protein belongs to the class-I aminoacyl-tRNA synthetase family. As to quaternary structure, monomer.

Its subcellular location is the cytoplasm. The enzyme catalyses tRNA(Gln) + L-glutamine + ATP = L-glutaminyl-tRNA(Gln) + AMP + diphosphate. The polypeptide is Glutamine--tRNA ligase (Pseudoalteromonas atlantica (strain T6c / ATCC BAA-1087)).